We begin with the raw amino-acid sequence, 369 residues long: Endophilin-A (369 aa).

In terms of domain architecture, BAR spans 18–248 (TEKMGGAEGT…LQEKRSEAES (231 aa)). A coiled-coil region spans residues 227–247 (QCADVLRGLQETLQEKRSEAE). The segment at 266–295 (GGGGGLNEDGTPSHISSSASPLPSPMRSPA) is disordered. Over residues 277–294 (PSHISSSASPLPSPMRSP) the composition is skewed to low complexity. Positions 305–364 (QQQPCCQALYDFEPENPGELAFKENDIITLLNRVDDNWFEGAVNGRTGYFPQSYVQVQVP) constitute an SH3 domain.

This sequence belongs to the endophilin family.

The protein resides in the cytoplasm. Its subcellular location is the membrane. Functionally, required presynaptically at the neuromuscular junction. Implicated in synaptic vesicle endocytosis. The protein is Endophilin-A of Drosophila erecta (Fruit fly).